Consider the following 562-residue polypeptide: Arylsulfatase H (562 aa).

Ca(2+)-binding residues include D15, D16, and C55. C55 serves as the catalytic Nucleophile. C55 is subject to 3-oxoalanine (Cys). Substrate is bound at residue K115. The active site involves H117. Helical transmembrane passes span 167 to 187 (LWISTAVLSLVPLLLLIPKYA) and 189 to 209 (WFVVPWKVILTFALLAFLFFI). Residue H271 coordinates substrate. Residues D323 and N324 each contribute to the Ca(2+) site.

Belongs to the sulfatase family. Ca(2+) serves as cofactor. The conversion to 3-oxoalanine (also known as C-formylglycine, FGly), of a serine or cysteine residue in prokaryotes and of a cysteine residue in eukaryotes, is critical for catalytic activity.

The protein localises to the membrane. This chain is Arylsulfatase H (ARSH), found in Canis lupus familiaris (Dog).